Consider the following 272-residue polypeptide: Undecaprenyl-diphosphatase (272 aa).

Helical transmembrane passes span Met-1–Ile-21, Gln-39–Phe-59, Trp-91–Ile-111, Ser-117–Ile-137, Leu-151–Thr-171, Phe-196–Leu-216, Leu-228–Leu-248, and Leu-251–Ile-271.

It belongs to the UppP family.

Its subcellular location is the cell inner membrane. The catalysed reaction is di-trans,octa-cis-undecaprenyl diphosphate + H2O = di-trans,octa-cis-undecaprenyl phosphate + phosphate + H(+). In terms of biological role, catalyzes the dephosphorylation of undecaprenyl diphosphate (UPP). Confers resistance to bacitracin. In Colwellia psychrerythraea (strain 34H / ATCC BAA-681) (Vibrio psychroerythus), this protein is Undecaprenyl-diphosphatase.